Reading from the N-terminus, the 74-residue chain is Large ribosomal subunit protein bL28 (74 aa).

It belongs to the bacterial ribosomal protein bL28 family.

This Buchnera aphidicola subsp. Baizongia pistaciae (strain Bp) protein is Large ribosomal subunit protein bL28.